Reading from the N-terminus, the 73-residue chain is NAD(P)H-quinone oxidoreductase subunit L (73 aa).

Transmembrane regions (helical) follow at residues 6–26 (SLIGLTYAGLAVLYLLVLPLL) and 44–64 (VLMFFLVLFFFPGMVLLAPFM).

It belongs to the complex I NdhL subunit family. In terms of assembly, NDH-1 can be composed of about 15 different subunits; different subcomplexes with different compositions have been identified which probably have different functions.

Its subcellular location is the cellular thylakoid membrane. It catalyses the reaction a plastoquinone + NADH + (n+1) H(+)(in) = a plastoquinol + NAD(+) + n H(+)(out). It carries out the reaction a plastoquinone + NADPH + (n+1) H(+)(in) = a plastoquinol + NADP(+) + n H(+)(out). Functionally, NDH-1 shuttles electrons from an unknown electron donor, via FMN and iron-sulfur (Fe-S) centers, to quinones in the respiratory and/or the photosynthetic chain. The immediate electron acceptor for the enzyme in this species is believed to be plastoquinone. Couples the redox reaction to proton translocation, and thus conserves the redox energy in a proton gradient. Cyanobacterial NDH-1 also plays a role in inorganic carbon-concentration. The protein is NAD(P)H-quinone oxidoreductase subunit L of Synechococcus sp. (strain JA-2-3B'a(2-13)) (Cyanobacteria bacterium Yellowstone B-Prime).